We begin with the raw amino-acid sequence, 122 residues long: Iron-sulfur cluster insertion protein ErpA (122 aa).

Iron-sulfur cluster contacts are provided by Cys50, Cys114, and Cys116.

It belongs to the HesB/IscA family. Homodimer. Iron-sulfur cluster serves as cofactor.

In terms of biological role, required for insertion of 4Fe-4S clusters for at least IspG. The protein is Iron-sulfur cluster insertion protein ErpA of Alkalilimnicola ehrlichii (strain ATCC BAA-1101 / DSM 17681 / MLHE-1).